The sequence spans 515 residues: 2-isopropylmalate synthase (515 aa).

The region spanning 4–264 (VKIFDTTLRD…NIGINQDTTQ (261 aa)) is the Pyruvate carboxyltransferase domain. Residues Asp13, His201, His203, and Asn237 each contribute to the Mn(2+) site. The segment at 390–515 (ELDYLSVNTG…RQTTSAQEGI (126 aa)) is regulatory domain.

Belongs to the alpha-IPM synthase/homocitrate synthase family. LeuA type 1 subfamily. Homodimer. Mn(2+) serves as cofactor.

Its subcellular location is the cytoplasm. The catalysed reaction is 3-methyl-2-oxobutanoate + acetyl-CoA + H2O = (2S)-2-isopropylmalate + CoA + H(+). It participates in amino-acid biosynthesis; L-leucine biosynthesis; L-leucine from 3-methyl-2-oxobutanoate: step 1/4. Its function is as follows. Catalyzes the condensation of the acetyl group of acetyl-CoA with 3-methyl-2-oxobutanoate (2-ketoisovalerate) to form 3-carboxy-3-hydroxy-4-methylpentanoate (2-isopropylmalate). The polypeptide is 2-isopropylmalate synthase (Halothermothrix orenii (strain H 168 / OCM 544 / DSM 9562)).